The chain runs to 298 residues: Max-like protein X (298 aa).

The disordered stretch occupies residues 1-63 (MTEPGASPED…ARGCREDSSH (63 aa)). Residue serine 7 is modified to Phosphoserine. Residues 28 to 37 (GRARARRGSG) show a composition bias toward basic residues. Phosphoserine occurs at positions 45, 48, 74, 77, and 98. The span at 98 to 109 (SIGSTSASSVPN) shows a compositional bias: polar residues. Positions 98–119 (SIGSTSASSVPNTDDEDSDYQQ) are disordered. In terms of domain architecture, bHLH spans 129 to 187 (RRRRAHTQAEQKRRDAIKRGYDDLQTIVPTCQQQDFSIGSQKLSKAIVLQKTIDYIQFL). The leucine-zipper stretch occupies residues 194-214 (QEEEVSTLRKDVTALKIMKVN).

As to quaternary structure, efficient DNA binding requires dimerization with another bHLH protein. Binds DNA as a heterodimer with MAD1, MAD4, MNT, WBSCR14 and MLXIP. Can also bind DNA as a homodimer. Expressed in all tissues examined: stomach, duodenum, jejunum, ileum, colon, liver, pancreas, salivary gland, kidney, spleen, lung, heart, skeletal muscle, brain, ovary and testis.

It localises to the cytoplasm. The protein localises to the nucleus. In terms of biological role, transcription regulator. Forms a sequence-specific DNA-binding protein complex with MAD1, MAD4, MNT, WBSCR14 and MLXIP which recognizes the core sequence 5'-CACGTG-3'. The TCFL4-MAD1, TCFL4-MAD4, TCFL4-WBSCR14 complexes are transcriptional repressors. Plays a role in transcriptional activation of glycolytic target genes. Involved in glucose-responsive gene regulation. This Mus musculus (Mouse) protein is Max-like protein X (Mlx).